A 156-amino-acid polypeptide reads, in one-letter code: Large ribosomal subunit protein uL22 (156 aa).

This sequence belongs to the universal ribosomal protein uL22 family. In terms of assembly, part of the 50S ribosomal subunit.

In terms of biological role, this protein binds specifically to 23S rRNA. It makes multiple contacts with different domains of the 23S rRNA in the assembled 50S subunit and ribosome. Functionally, the globular domain of the protein is located near the polypeptide exit tunnel on the outside of the subunit, while an extended beta-hairpin is found that lines the wall of the exit tunnel in the center of the 70S ribosome. This Hyperthermus butylicus (strain DSM 5456 / JCM 9403 / PLM1-5) protein is Large ribosomal subunit protein uL22.